A 281-amino-acid polypeptide reads, in one-letter code: Pantothenate synthetase (281 aa).

30–37 (MGNLHQGH) serves as a coordination point for ATP. The active-site Proton donor is histidine 37. A (R)-pantoate-binding site is contributed by glutamine 61. Glutamine 61 is a beta-alanine binding site. Residue 148 to 151 (GQKD) participates in ATP binding. A (R)-pantoate-binding site is contributed by glutamine 154. ATP-binding positions include alanine 177 and 185–188 (LSSR).

Belongs to the pantothenate synthetase family. In terms of assembly, homodimer.

The protein resides in the cytoplasm. It carries out the reaction (R)-pantoate + beta-alanine + ATP = (R)-pantothenate + AMP + diphosphate + H(+). The protein operates within cofactor biosynthesis; (R)-pantothenate biosynthesis; (R)-pantothenate from (R)-pantoate and beta-alanine: step 1/1. Catalyzes the condensation of pantoate with beta-alanine in an ATP-dependent reaction via a pantoyl-adenylate intermediate. The protein is Pantothenate synthetase of Acinetobacter baylyi (strain ATCC 33305 / BD413 / ADP1).